We begin with the raw amino-acid sequence, 206 residues long: Dehydration-responsive element-binding protein 2D (206 aa).

The interval 13-40 (ANKKQRTVQASSRKGCMRGKGGPDNASC) is disordered. The segment at residues 41–98 (TYKGVRQRTWGKWVAEIREPNRGARLWLGTFDTSREAALAYDSAARKLYGPEAHLNLP) is a DNA-binding region (AP2/ERF). The disordered stretch occupies residues 102 to 139 (RSYPKTASSPASQTTPSSNTGGKSSSDSESPCSSNEMS). A compositionally biased stretch (low complexity) spans 107–139 (TASSPASQTTPSSNTGGKSSSDSESPCSSNEMS).

Belongs to the AP2/ERF transcription factor family. ERF subfamily.

The protein localises to the nucleus. In terms of biological role, putative transcriptional activator that binds specifically to the DNA sequence 5'-[AG]CCGAC-3'. Binding to the C-repeat/DRE element mediates high salinity-inducible transcription. The protein is Dehydration-responsive element-binding protein 2D (DREB2D) of Arabidopsis thaliana (Mouse-ear cress).